Reading from the N-terminus, the 131-residue chain is D-ribose pyranase (131 aa).

The active-site Proton donor is the His-20. Residues Asp-28, His-98, and 120 to 122 (YAN) contribute to the substrate site.

It belongs to the RbsD / FucU family. RbsD subfamily. Homodecamer.

The protein localises to the cytoplasm. It carries out the reaction beta-D-ribopyranose = beta-D-ribofuranose. Its pathway is carbohydrate metabolism; D-ribose degradation; D-ribose 5-phosphate from beta-D-ribopyranose: step 1/2. Catalyzes the interconversion of beta-pyran and beta-furan forms of D-ribose. The sequence is that of D-ribose pyranase from Clostridium perfringens (strain SM101 / Type A).